Reading from the N-terminus, the 881-residue chain is Phosphoinositide 3-kinase regulatory subunit 5 (881 aa).

A heterodimerization region spans residues 23 to 99 (SRDAVSSRWA…APHIPPDSEL (77 aa)). 2 disordered regions span residues 312–339 (PVAS…ERDS) and 472–499 (PQAK…KLQT). The span at 316–330 (ENEEDEEEEEEDVET) shows a compositional bias: acidic residues. An interaction with G beta gamma proteins region spans residues 657 to 757 (PILADMILYY…WNDVEKVCTS (101 aa)).

Heterodimer. Interacts with a catalytic subunit and with G beta gamma proteins.

Its subcellular location is the nucleus. It is found in the cytoplasm. It localises to the cell membrane. Its activity is regulated as follows. Greatly activated by G gamma proteins. In terms of biological role, regulatory subunit of the PI3K gamma complex. The protein is Phosphoinositide 3-kinase regulatory subunit 5 (PIK3R5) of Gallus gallus (Chicken).